The primary structure comprises 110 residues: Large ribosomal subunit protein uL22 (110 aa).

Belongs to the universal ribosomal protein uL22 family. As to quaternary structure, part of the 50S ribosomal subunit.

Functionally, this protein binds specifically to 23S rRNA; its binding is stimulated by other ribosomal proteins, e.g. L4, L17, and L20. It is important during the early stages of 50S assembly. It makes multiple contacts with different domains of the 23S rRNA in the assembled 50S subunit and ribosome. The globular domain of the protein is located near the polypeptide exit tunnel on the outside of the subunit, while an extended beta-hairpin is found that lines the wall of the exit tunnel in the center of the 70S ribosome. This chain is Large ribosomal subunit protein uL22, found in Leptospira borgpetersenii serovar Hardjo-bovis (strain JB197).